Here is a 114-residue protein sequence, read N- to C-terminus: Cytochrome c2 (114 aa).

The residue at position 1 (Gln-1) is a Pyrrolidone carboxylic acid. 4 residues coordinate heme c: Cys-13, Cys-16, His-17, and Met-93.

Belongs to the cytochrome c family. Binds 1 heme c group covalently per subunit.

The protein resides in the periplasm. Functionally, cytochrome c2 is found mainly in purple, non-sulfur, photosynthetic bacteria where it functions as the electron donor to the oxidized bacteriochlorophyll in the photophosphorylation pathway. However, it may also have a role in the respiratory chain and is found in some non-photosynthetic bacteria. The protein is Cytochrome c2 of Rhodopseudomonas palustris.